The following is a 180-amino-acid chain: Flavodoxin 2 (180 aa).

Positions 4 to 173 (IGLFFGSNTG…RVAAWLAQIA (170 aa)) constitute a Flavodoxin-like domain. FMN-binding positions include 10–15 (SNTGKT), T57, G61, D99, 106–108 (NYL), and D155.

It depends on FMN as a cofactor.

In terms of biological role, flavodoxins are low-potential electron donors to a number of redox enzymes. NifF is the electron donor to nitrogenase, and is thus implicated in nitrogen fixation. Does not function as an electron donor to nitrite reductase. The polypeptide is Flavodoxin 2 (Azotobacter vinelandii).